The following is a 137-amino-acid chain: Protein MesC (137 aa).

The protein is Protein MesC (mesC) of Leuconostoc mesenteroides.